A 197-amino-acid polypeptide reads, in one-letter code: UPF0251 protein CT1277 (197 aa).

Residues 138–197 (GGGFGGGRRGGGKCRGFRSGLDRGPGHGEGRCQGEGHGNGNGNGNGQGRMRRNQQEGGEV) form a disordered region. The segment covering 157-171 (GLDRGPGHGEGRCQG) has biased composition (basic and acidic residues). Positions 172–184 (EGHGNGNGNGNGQ) are enriched in gly residues.

This sequence belongs to the UPF0251 family.

In Chlorobaculum tepidum (strain ATCC 49652 / DSM 12025 / NBRC 103806 / TLS) (Chlorobium tepidum), this protein is UPF0251 protein CT1277.